A 37-amino-acid polypeptide reads, in one-letter code: MKIRASVRKICEKCRLIRRRGRIRVICSNPRHKQRQG.

Belongs to the bacterial ribosomal protein bL36 family.

The protein resides in the plastid. It localises to the chloroplast. This is Large ribosomal subunit protein bL36c from Lactuca sativa (Garden lettuce).